Consider the following 517-residue polypeptide: Glutamate--tRNA ligase (517 aa).

The short motif at 14-24 is the 'HIGH' region element; sequence PSPTGPLHIGG. Residues 266 to 270 carry the 'KMSKS' region motif; that stretch reads KLSKR. Lys-269 provides a ligand contact to ATP.

It belongs to the class-I aminoacyl-tRNA synthetase family. Glutamate--tRNA ligase type 1 subfamily. In terms of assembly, monomer.

It localises to the cytoplasm. The catalysed reaction is tRNA(Glu) + L-glutamate + ATP = L-glutamyl-tRNA(Glu) + AMP + diphosphate. Its function is as follows. Catalyzes the attachment of glutamate to tRNA(Glu) in a two-step reaction: glutamate is first activated by ATP to form Glu-AMP and then transferred to the acceptor end of tRNA(Glu). This chain is Glutamate--tRNA ligase, found in Cytophaga hutchinsonii (strain ATCC 33406 / DSM 1761 / CIP 103989 / NBRC 15051 / NCIMB 9469 / D465).